The sequence spans 424 residues: UPF0597 protein Shew185_3080 (424 aa).

It belongs to the UPF0597 family.

This is UPF0597 protein Shew185_3080 from Shewanella baltica (strain OS185).